The chain runs to 765 residues: Glucosamine inositolphosphorylceramide transferase 1 (765 aa).

The next 3 helical transmembrane spans lie at 43–63 (FFAS…WFVF), 394–414 (VILG…LGFL), and 476–496 (MGKF…CVGV). Residues N553, 577–582 (NSLNNR), 598–600 (DDD), R628, and 683–687 (FNCED) each bind substrate. D600 contributes to the Mn(2+) binding site. C685 and C738 form a disulfide bridge. Residue D687 is part of the active site.

The protein belongs to the glycosyltransferase 64 family. Requires Mn(2+) as cofactor. As to expression, specifically and highly expressed in developing embryos and mature seeds. Also detected at low levels in stigma and pollen.

Its subcellular location is the membrane. It carries out the reaction an N-(2R-hydroxy-very-long-chain fatty acyl)-(R)-4-hydroxysphingoid base + a 1,2-diacyl-sn-glycero-3-phospho-(1D-myo-inositol) = a 1D-myo-inositol-1-phospho-N-[(R)-2-hydroxy-very-long-chain fatty acyl]-(R)-4-hydroxysphingoid base + a 1,2-diacyl-sn-glycerol. The protein operates within sphingolipid metabolism. In terms of biological role, glycosyltransferase that mediates the glycosylation of glycosylinositol phosphorylceramides (GIPCs), the major sphingolipids in the plasma membrane; acts as a HexN(Ac)-specific GIPC sugar transferase and accepts glucosamine (GlcN) and N-acetylglucosamine (GlcNAc) as the sugar unit. Responsible for the glycosylation of a subgroup of GIPCs found in seeds and pollen that contain GlcNAc and GlcN (GlcN(Ac)). Maybe involved in the maintenance of cell-cell adhesion. The polypeptide is Glucosamine inositolphosphorylceramide transferase 1 (Arabidopsis thaliana (Mouse-ear cress)).